The chain runs to 239 residues: Heptaprenylglyceryl phosphate synthase (239 aa).

Residue K12 participates in sn-glycerol 1-phosphate binding. Residues D14 and T40 each contribute to the Mg(2+) site. Sn-glycerol 1-phosphate is bound by residues 159–164 (YLEYSG), G189, and 209–210 (GN).

This sequence belongs to the GGGP/HepGP synthase family. Group I subfamily. As to quaternary structure, homodimer. Requires Mg(2+) as cofactor.

The enzyme catalyses sn-glycerol 1-phosphate + all-trans-heptaprenyl diphosphate = 3-heptaprenyl-sn-glycero-1-phosphate + diphosphate. It participates in membrane lipid metabolism; glycerophospholipid metabolism. Functionally, prenyltransferase that catalyzes in vivo the transfer of the heptaprenyl moiety of heptaprenyl pyrophosphate (HepPP; 35 carbon atoms) to the C3 hydroxyl of sn-glycerol-1-phosphate (G1P), producing heptaprenylglyceryl phosphate (HepGP). This reaction is an ether-bond-formation step in the biosynthesis of archaea-type G1P-based membrane lipids found in Bacillales. This is Heptaprenylglyceryl phosphate synthase from Geobacillus thermodenitrificans (strain NG80-2).